The chain runs to 160 residues: Cytochrome b6-f complex subunit 4 (160 aa).

The next 3 membrane-spanning stretches (helical) occupy residues 36 to 56 (LLYI…GLAV), 95 to 115 (LLGV…PFLE), and 131 to 151 (TVFL…TLPI).

This sequence belongs to the cytochrome b family. PetD subfamily. In terms of assembly, the 4 large subunits of the cytochrome b6-f complex are cytochrome b6, subunit IV (17 kDa polypeptide, petD), cytochrome f and the Rieske protein, while the 4 small subunits are petG, petL, petM and petN. The complex functions as a dimer.

The protein resides in the plastid. Its subcellular location is the chloroplast thylakoid membrane. In terms of biological role, component of the cytochrome b6-f complex, which mediates electron transfer between photosystem II (PSII) and photosystem I (PSI), cyclic electron flow around PSI, and state transitions. The chain is Cytochrome b6-f complex subunit 4 from Solanum tuberosum (Potato).